Consider the following 527-residue polypeptide: MYAYEALPVAEWFRRNRELAGFHNPTRALYQTIRELTENSLDATETYGILPTIYLRVNIEDEQKGWVSVYAEDNGIGIPGNEIPNVFGRVFYSSKYKIKQHRGVFGLGLKMVVLYSQSTTNKPVLVRSATLKSDKIYEYQIMIDTNSNSPIILDRREYPNRYKWHGTAVKVYLEGNWLAAKKRIEDYLKRTAIIAPYAEIVFKGPDLELWLKRRTTKLPPAPKEGLPHPKSVDVDTLKQMIQESRGLTLLEFLMENFDAVGEGTAKAFLEWAGFNPNAKVTALTPEELVKLVDKMKQYEGWRRPRSDWLSPAGAELLEIGAKAILGAEAVFAITRKPESYGGHPFIVEAAVAWGGQIPPADKPLLLRYANKIPLLYDEGADVARKVVDEFNWQNYKVKFPAPLAVIIHVCSTKIPYASAGKEAIAEVPEIEKEMKLALRDAAKKLRLYLSRKEKEMEMLNKYISLAKYVEEIAYNLSMITRIEKESLAKNLHTLIERKIGLTIEELVKHTLSMSSTSQEEVVEATPQ.

Residues N39, D73, 94–95, 103–110, and K421 each bind ATP; these read SK and GVFGLGLK.

The protein belongs to the TOP6B family. Homodimer. Heterotetramer of two Top6A and two Top6B chains.

The enzyme catalyses ATP-dependent breakage, passage and rejoining of double-stranded DNA.. Functionally, relaxes both positive and negative superturns and exhibits a strong decatenase activity. This chain is Type 2 DNA topoisomerase 6 subunit B, found in Pyrobaculum aerophilum (strain ATCC 51768 / DSM 7523 / JCM 9630 / CIP 104966 / NBRC 100827 / IM2).